Here is a 162-residue protein sequence, read N- to C-terminus: Phosphopantetheine adenylyltransferase (162 aa).

Ser11 contributes to the substrate binding site. ATP-binding positions include 11–12 (SF) and His19. Substrate is bound by residues Lys43, Leu75, and Arg89. ATP-binding positions include 90–92 (GLR), Glu100, and 125–131 (YSYLSSS).

The protein belongs to the bacterial CoaD family. In terms of assembly, homohexamer. Mg(2+) is required as a cofactor.

It is found in the cytoplasm. The catalysed reaction is (R)-4'-phosphopantetheine + ATP + H(+) = 3'-dephospho-CoA + diphosphate. It functions in the pathway cofactor biosynthesis; coenzyme A biosynthesis; CoA from (R)-pantothenate: step 4/5. Its function is as follows. Reversibly transfers an adenylyl group from ATP to 4'-phosphopantetheine, yielding dephospho-CoA (dPCoA) and pyrophosphate. The protein is Phosphopantetheine adenylyltransferase of Geotalea uraniireducens (strain Rf4) (Geobacter uraniireducens).